Reading from the N-terminus, the 399-residue chain is S-adenosylmethionine synthase (399 aa).

Histidine 17 is an ATP binding site. Aspartate 19 contacts Mg(2+). A K(+)-binding site is contributed by glutamate 45. Residues glutamate 58 and glutamine 101 each coordinate L-methionine. The tract at residues 101–111 (QSPDIAQGVDK) is flexible loop. ATP-binding positions include 176-178 (DGK), 243-244 (RF), aspartate 252, 258-259 (RK), and lysine 279. Position 252 (aspartate 252) interacts with L-methionine. Lysine 283 contacts L-methionine.

The protein belongs to the AdoMet synthase family. In terms of assembly, homotetramer; dimer of dimers. Mg(2+) is required as a cofactor. The cofactor is K(+).

The protein localises to the cytoplasm. It carries out the reaction L-methionine + ATP + H2O = S-adenosyl-L-methionine + phosphate + diphosphate. Its pathway is amino-acid biosynthesis; S-adenosyl-L-methionine biosynthesis; S-adenosyl-L-methionine from L-methionine: step 1/1. Its function is as follows. Catalyzes the formation of S-adenosylmethionine (AdoMet) from methionine and ATP. The overall synthetic reaction is composed of two sequential steps, AdoMet formation and the subsequent tripolyphosphate hydrolysis which occurs prior to release of AdoMet from the enzyme. The protein is S-adenosylmethionine synthase of Staphylococcus epidermidis (strain ATCC 35984 / DSM 28319 / BCRC 17069 / CCUG 31568 / BM 3577 / RP62A).